The sequence spans 68 residues: DNA-directed RNA polymerase subunit omega (68 aa).

It belongs to the RNA polymerase subunit omega family. The RNAP catalytic core consists of 2 alpha, 1 beta, 1 beta' and 1 omega subunit. When a sigma factor is associated with the core the holoenzyme is formed, which can initiate transcription.

The catalysed reaction is RNA(n) + a ribonucleoside 5'-triphosphate = RNA(n+1) + diphosphate. Functionally, promotes RNA polymerase assembly. Latches the N- and C-terminal regions of the beta' subunit thereby facilitating its interaction with the beta and alpha subunits. This Sulfurovum sp. (strain NBC37-1) protein is DNA-directed RNA polymerase subunit omega.